A 45-amino-acid polypeptide reads, in one-letter code: Mu-conotoxin-like Cal 12.1.2d (45 aa).

Disulfide bonds link Cys3–Cys16, Cys11–Cys28, Cys18–Cys33, and Cys27–Cys39. The residue at position 17 (Trp17) is a 6'-bromotryptophan. 4-hydroxyproline is present on Pro23. A 6'-bromotryptophan mark is found at Trp37 and Trp38. Position 40 is a 4-hydroxyproline (Pro40).

Expressed by the venom duct.

It is found in the secreted. Mu-conotoxins block voltage-gated sodium channels. This toxin reversibly blocks voltage-gated sodium channel in cephalopods, with no alteration in the voltage dependence of sodium conductance or on the kinetics of inactivation. This chain is Mu-conotoxin-like Cal 12.1.2d, found in Californiconus californicus (California cone).